We begin with the raw amino-acid sequence, 1872 residues long: Ral GTPase-activating protein subunit alpha-2 (1872 aa).

The segment at 350-370 is disordered; the sequence is DGAGSTEQDKSHSNSSTLSDR. Phosphoserine is present on residues Ser373, Ser376, and Ser379. Residues 445–469 are compositionally biased toward basic and acidic residues; the sequence is PDKKDVAQEDADKLGLSETDSKEAS. The tract at residues 445–481 is disordered; that stretch reads PDKKDVAQEDADKLGLSETDSKEASSESSGHKRSSSW. Position 486 is a phosphoserine (Ser486). Phosphoserine; by PKB is present on Ser696. 2 disordered regions span residues 711–730 and 758–813; these read FRSA…NTVR and QQVP…GITM. Phosphothreonine; by PKB is present on Thr715. Composition is skewed to polar residues over residues 758–768 and 775–795; these read QQVPRSSSTSD and SDSS…SEPK. Residues 796–810 show a composition bias toward basic and acidic residues; the sequence is SVQESKGHVTHEHEG. 2 positions are modified to phosphoserine: Ser819 and Ser820. The disordered stretch occupies residues 831-851; it reads QQAHGRCRQRQTSESTGSDTV. The segment covering 840–849 has biased composition (polar residues); that stretch reads RQTSESTGSD. A Phosphoserine modification is found at Ser1592. Residues 1634–1842 enclose the Rap-GAP domain; sequence LKNLDSRQCR…EERALYLEAI (209 aa).

As to quaternary structure, component of the heterodimeric RalGAP2 complex with RALGAPB. Heterodimerization is required for activity. As to expression, abundantly expressed in testis, pancreas, lung, thymus, brown fat, and white fat.

The protein resides in the cytoplasm. Functionally, catalytic subunit of the heterodimeric RalGAP2 complex which acts as a GTPase activator for the Ras-like small GTPases RALA and RALB. This Mus musculus (Mouse) protein is Ral GTPase-activating protein subunit alpha-2 (Ralgapa2).